A 58-amino-acid chain; its full sequence is MSNVIVKENESLDSALRRFKRNCAKAGIQQEIRKREHYEKPSVKRKKKSEAARKRKFK.

Residues 32–42 (IRKREHYEKPS) show a composition bias toward basic and acidic residues. Positions 32–58 (IRKREHYEKPSVKRKKKSEAARKRKFK) are disordered. Over residues 43 to 58 (VKRKKKSEAARKRKFK) the composition is skewed to basic residues.

The protein belongs to the bacterial ribosomal protein bS21 family.

This is Small ribosomal subunit protein bS21 from Lachnoclostridium phytofermentans (strain ATCC 700394 / DSM 18823 / ISDg) (Clostridium phytofermentans).